The primary structure comprises 338 residues: Decarboxylase macB (338 aa).

The Zn(2+) site is built by histidine 7, histidine 9, histidine 159, and aspartate 283.

Belongs to the metallo-dependent hydrolases superfamily. ACMSD family.

The enzyme catalyses 6-methylsalicylate + H(+) = 3-methylphenol + CO2. The protein operates within secondary metabolite biosynthesis; terpenoid biosynthesis. Functionally, decarboxylase; part of the gene cluster that mediates the biosynthesis of macrophorins, isoprenoid epoxycyclohexenones containing cyclized drimane moieties. The first step of the pathway is the synthesis of 6-methylsalicylic acid (6-MSA) by the polyketide synthase macA. 6-MSA is then converted to m-cresol by the decarboxylase macB. The cytochrome P450 monooxygenase macC then catalyzes the oxidation of m-cresol to toluquinol. Epoxidation of toluquinol is then performed by the short chain dehydrogenase macD, with the help of macE, and a further prenylation by macG leads to 7-deacetoxyyanuthone A. The next step is the hydroxylation of C-22 of 7-deacetoxyyanuthone A by the cytochrome P450 monooxygenase macH to yield 22-deacetylyanuthone A. O-Mevalon transferase macI then attaches mevalon to the hydroxyl group of 22-deacetylyanuthone A to produce yanuthone E. The terpene cyclase macJ catalyzes the cyclization of 22-deacetylyanuthone A to macrophorin A. MacJ is also able to catalyze cyclization of yanuthone E and 7-deacetoxyyanuthone A to their corresponding macrophorins. The macJ products can be further modified by macH and macJ, as well as by the FAD-dependent monooxygenase macF, to produce additional macrophorins, including 4'-oxomacrophorin A, 4'-oxomacrophorin D and 4'-oxomacrophorin E. The chain is Decarboxylase macB from Penicillium terrestre.